The following is a 370-amino-acid chain: GTPase Obg (370 aa).

One can recognise an Obg domain in the interval 1-159; the sequence is MKFIDEARIE…RKLKLELKVL (159 aa). Residues 129-148 are disordered; the sequence is HFKSSTNRAPRQKTNGKSGE. Residues 130-145 are compositionally biased toward polar residues; sequence FKSSTNRAPRQKTNGK. The region spanning 160–334 is the OBG-type G domain; that stretch reads ADVGLLGMPN…LCYSLQDYLD (175 aa). GTP contacts are provided by residues 166–173, 191–195, 213–216, 284–287, and 315–317; these read GMPNAGKS, FTTLH, DIPG, NKVD, and SAL. Positions 173 and 193 each coordinate Mg(2+).

It belongs to the TRAFAC class OBG-HflX-like GTPase superfamily. OBG GTPase family. As to quaternary structure, monomer. Mg(2+) serves as cofactor.

The protein localises to the cytoplasm. An essential GTPase which binds GTP, GDP and possibly (p)ppGpp with moderate affinity, with high nucleotide exchange rates and a fairly low GTP hydrolysis rate. Plays a role in control of the cell cycle, stress response, ribosome biogenesis and in those bacteria that undergo differentiation, in morphogenesis control. The protein is GTPase Obg of Polynucleobacter necessarius subsp. necessarius (strain STIR1).